Here is a 634-residue protein sequence, read N- to C-terminus: (-)-limonene synthase, chloroplastic (634 aa).

Residues 1 to 21 (MSPVSAIPLAYKLCLPRSLIS) constitute a chloroplast transit peptide. Arg-348, Asp-385, Asp-389, Arg-526, and Gly-529 together coordinate (2E)-geranyl diphosphate. Residues Asp-385 and Asp-389 each coordinate Mg(2+). A DDXXD motif motif is present at residues 385-389 (DDIYD). The Mg(2+) site is built by Gly-529 and Asp-537.

Belongs to the terpene synthase family. Tpsb subfamily. Monomer. Mg(2+) is required as a cofactor. The cofactor is Mn(2+).

It is found in the plastid. Its subcellular location is the chloroplast. It carries out the reaction (2E)-geranyl diphosphate = (4S)-limonene + diphosphate. Its pathway is secondary metabolite biosynthesis; terpenoid biosynthesis. The protein operates within terpene metabolism; oleoresin biosynthesis. In terms of biological role, monoterpene synthase (mono-TPS) involved in the biosynthesis of monoterpene natural products. Catalyzes the conversion of (2E)-geranyl diphosphate (GPP) into (-)-limonene. Not able to use geranylgeranyl pyrophosphate (GGPP) and farnesyl pyrophosphate (FPP) as substrates. The polypeptide is (-)-limonene synthase, chloroplastic (Picea sitchensis (Sitka spruce)).